The following is a 260-amino-acid chain: Hydroxyethylthiazole kinase (260 aa).

Residue methionine 38 coordinates substrate. Lysine 114 and serine 161 together coordinate ATP. A substrate-binding site is contributed by glycine 188.

The protein belongs to the Thz kinase family. It depends on Mg(2+) as a cofactor.

The catalysed reaction is 5-(2-hydroxyethyl)-4-methylthiazole + ATP = 4-methyl-5-(2-phosphooxyethyl)-thiazole + ADP + H(+). The protein operates within cofactor biosynthesis; thiamine diphosphate biosynthesis; 4-methyl-5-(2-phosphoethyl)-thiazole from 5-(2-hydroxyethyl)-4-methylthiazole: step 1/1. In terms of biological role, catalyzes the phosphorylation of the hydroxyl group of 4-methyl-5-beta-hydroxyethylthiazole (THZ). The protein is Hydroxyethylthiazole kinase of Campylobacter lari (strain RM2100 / D67 / ATCC BAA-1060).